A 123-amino-acid chain; its full sequence is Small ribosomal subunit protein uS12 (123 aa).

The segment at methionine 1–proline 28 is disordered. Residues arginine 9–serine 21 show a composition bias toward basic residues. Position 89 is a 3-methylthioaspartic acid (aspartate 89).

This sequence belongs to the universal ribosomal protein uS12 family. As to quaternary structure, part of the 30S ribosomal subunit. Contacts proteins S8 and S17. May interact with IF1 in the 30S initiation complex.

With S4 and S5 plays an important role in translational accuracy. In terms of biological role, interacts with and stabilizes bases of the 16S rRNA that are involved in tRNA selection in the A site and with the mRNA backbone. Located at the interface of the 30S and 50S subunits, it traverses the body of the 30S subunit contacting proteins on the other side and probably holding the rRNA structure together. The combined cluster of proteins S8, S12 and S17 appears to hold together the shoulder and platform of the 30S subunit. This chain is Small ribosomal subunit protein uS12, found in Ruegeria sp. (strain TM1040) (Silicibacter sp.).